The following is a 122-amino-acid chain: Large ribosomal subunit protein uL14 (122 aa).

The protein belongs to the universal ribosomal protein uL14 family. In terms of assembly, part of the 50S ribosomal subunit. Forms a cluster with proteins L3 and L19. In the 70S ribosome, L14 and L19 interact and together make contacts with the 16S rRNA in bridges B5 and B8.

Functionally, binds to 23S rRNA. Forms part of two intersubunit bridges in the 70S ribosome. This chain is Large ribosomal subunit protein uL14, found in Micrococcus luteus (strain ATCC 4698 / DSM 20030 / JCM 1464 / CCM 169 / CCUG 5858 / IAM 1056 / NBRC 3333 / NCIMB 9278 / NCTC 2665 / VKM Ac-2230) (Micrococcus lysodeikticus).